We begin with the raw amino-acid sequence, 1285 residues long: Ataxin-2 (1285 aa).

Disordered stretches follow at residues Met1–Arg85, Ala111–Ala178, and Pro197–Gln224. Over residues Ser29 to Gly38 the composition is skewed to basic residues. Pro residues predominate over residues Ala48–Pro65. Positions Ser128 to Pro144 are enriched in low complexity. Over residues Ala205 to Arg214 the composition is skewed to gly residues. Residues Ser218 and Ser219 each carry the phosphoserine modification. Residues Arg237–Asp314 enclose the Sm domain. Phosphoserine occurs at positions 362 and 435. 2 stretches are compositionally biased toward basic and acidic residues: residues Ala428–Tyr440 and Cys447–Lys461. Disordered regions lie at residues Ala428–Pro925 and Ala1111–Phe1191. Ser477 is subject to Phosphoserine. Polar residues predominate over residues Ala498 to Ser510. Ser523 is modified (phosphoserine). A compositionally biased stretch (low complexity) spans Pro526–Arg552. The segment covering Pro554–His567 has biased composition (pro residues). Ser593 carries the post-translational modification Phosphoserine. Over residues Ala596 to Ser606 the composition is skewed to basic residues. Arg609 carries the asymmetric dimethylarginine; alternate modification. Arg609 is subject to Omega-N-methylarginine; alternate. Ser611 and Ser653 each carry phosphoserine. The segment covering Pro662–Ser672 has biased composition (polar residues). The segment covering Pro685–Pro694 has biased composition (low complexity). Phosphoserine is present on Ser697. Residue Thr710 is modified to Phosphothreonine. The segment covering Ala737–Lys746 has biased composition (polar residues). 2 positions are modified to phosphoserine: Ser741 and Ser753. Residues Ser757–Phe773 show a composition bias toward basic and acidic residues. Polar residues predominate over residues Gln776–Ser789. Basic and acidic residues predominate over residues Lys790–Phe813. Low complexity predominate over residues Ile814–Ser838. Residues Ser827, Ser828, Ser832, Ser836, Ser838, Ser859, and Ser860 each carry the phosphoserine modification. Residues Val851–Ala862 are compositionally biased toward polar residues. Residue Lys864 forms a Glycyl lysine isopeptide (Lys-Gly) (interchain with G-Cter in SUMO2) linkage. The segment covering Lys864–Arg881 has biased composition (basic and acidic residues). 2 stretches are compositionally biased toward low complexity: residues Ser896–Thr907 and Gly1128–Ala1165.

The protein belongs to the ataxin-2 family. As to quaternary structure, interacts with RBFOX1. Monomer. Can also form homodimers. Interacts with polyribosomes. Interacts with EGFR. Interacts with SH3GL3. Interacts with SH3GL2, SH3KBP1 and CBL. Interacts with ATXN2L. As to expression, expressed in the heart, lung, liver, kidney, skeletal muscle, spleen and intestine. Predominant expression was seen in the brain where a high level expression was found in the pyramidal cortical neurons, large brain stem neurons and cerebellar Purkinje cells. All three isoforms were found in all the tissues except skeletal muscle where only isoform 1 was found.

It is found in the cytoplasm. In terms of biological role, involved in EGFR trafficking, acting as negative regulator of endocytic EGFR internalization at the plasma membrane. The protein is Ataxin-2 (Atxn2) of Mus musculus (Mouse).